A 144-amino-acid chain; its full sequence is Necrosis-inducing secreted protein 1 (144 aa).

Positions 1-19 (MQFRASIAAAAGLFALANA) are cleaved as a signal peptide. N88, N126, and N133 each carry an N-linked (GlcNAc...) asparagine glycan. The segment at 103 to 132 (QYVVAAGLYSLYGASSSPTLSHYNVTVTVG) is BAK1/SERK3-binding.

Belongs to the NIS1 effector family.

Its subcellular location is the secreted. It localises to the host cytoplasm. Secreted effector that induces necrotic lesions in Nicotiana benthamiana. Interacts with the host receptor-like kinases (RLKs) BAK1/SERK3 and BKK1/SERK4, inhibits their kinase activity and suppresses INF1-induced pathogen-associated molecular pattern (PAMP)-triggered immunity (PTI) in N.benthamiana. Also interacts with the host receptor-like cytoplasmic kinase (RLCK) BIK1 and inhibits its kinase activity, thereby inhibiting PAMP-induced ROS generation. In PTI, phosphorylation relaying by RLKs and RLCKs is critical for the initiation of downstream signaling. This chain is Necrosis-inducing secreted protein 1, found in Colletotrichum higginsianum (strain IMI 349063) (Crucifer anthracnose fungus).